Reading from the N-terminus, the 275-residue chain is Endolytic peptidoglycan transglycosylase RlpA (275 aa).

The signal sequence occupies residues 1–22 (MQIKTITLKLSAVSLGALFFSG). The N-palmitoyl cysteine moiety is linked to residue C23. C23 carries S-diacylglycerol cysteine lipidation. The region spanning 200–275 (IYEGGNFMVQ…AFAGAFVVRE (76 aa)) is the SPOR domain.

The protein belongs to the RlpA family.

It is found in the cell membrane. In terms of biological role, lytic transglycosylase with a strong preference for naked glycan strands that lack stem peptides. This Campylobacter jejuni subsp. jejuni serotype O:2 (strain ATCC 700819 / NCTC 11168) protein is Endolytic peptidoglycan transglycosylase RlpA.